Reading from the N-terminus, the 114-residue chain is Large ribosomal subunit protein bL20c (114 aa).

The protein belongs to the bacterial ribosomal protein bL20 family.

The protein resides in the plastid. Binds directly to 23S ribosomal RNA and is necessary for the in vitro assembly process of the 50S ribosomal subunit. It is not involved in the protein synthesizing functions of that subunit. The chain is Large ribosomal subunit protein bL20c from Prototheca wickerhamii.